Consider the following 904-residue polypeptide: Polycystin-2 (904 aa).

Positions 1-102 (MSSSRVRPQA…SSSGGVPGNF (102 aa)) are disordered. Over 1–155 (MSSSRVRPQA…NSNREMYLKT (155 aa)) the chain is Cytoplasmic. Low complexity predominate over residues 8-20 (PQAPQSPAASASA). Basic and acidic residues predominate over residues 26–38 (EGIEMEKMHHEEV). Residues 86-96 (SVSTTSSSSSG) show a composition bias toward low complexity. A helical transmembrane segment spans residues 156-177 (VLREMITYILFLLTLCIITYGM). Residues 178 to 404 (VSTNMYYYTK…TVRLLRYVSS (227 aa)) are Extracellular-facing. Asn235, Asn241, and Asn264 each carry an N-linked (GlcNAc...) asparagine glycan. A disulfide bond links Cys267 and Cys280. An N-linked (GlcNAc...) asparagine glycan is attached at Asn298. Residues 405 to 425 (WDYFVGMCEVSFCLFVLYYLV) traverse the membrane as a helical segment. Residues 426–441 (EEALEIRLHRLRYFKS) are Cytoplasmic-facing. Residues 442–462 (LWNCLDVLIVALSVPAIIMNI) form a helical membrane-spanning segment. Residues 463–489 (CRTSAVSHRLHFLLENHSTYPNFEPLA) are Extracellular-facing. Residue Asn478 is glycosylated (N-linked (GlcNAc...) asparagine). A helical membrane pass occupies residues 490 to 510 (RLQVHFNNLAAIIVFLSWVKL). Residues 511-534 (FKFINFNKTMNQLSTTMSRCAKDL) are Cytoplasmic-facing. Residues 535-556 (MGFAIMFFIVFLAYAQLAYLVF) form a helical membrane-spanning segment. The Extracellular segment spans residues 557-568 (GTQVNDFSTFQA). The segment at residues 569-583 (CIFTQFRIILGDFDF) is an intramembrane region (pore-forming). Ca(2+) is bound at residue Leu578. The Selectivity filter signature appears at 578–580 (LGD). Residues 584-591 (SEIEEADS) lie on the Extracellular side of the membrane. The helical transmembrane segment at 592–612 (VLGPIYFTTFVFFIFMILLNM) threads the bilayer. At 613 to 904 (FLAIINDTYS…DAAASGPAHL (292 aa)) the chain is on the cytoplasmic side. In terms of domain architecture, EF-hand 1 spans 687–722 (HSDAEIEAIFAKYDLDGDQELTEHEHQQMRDDLEKE). 5 residues coordinate Ca(2+): Asp700, Asp702, Asp704, Glu706, and Glu711. Over residues 708 to 732 (TEHEHQQMRDDLEKEREDLDLEHSS) the composition is skewed to basic and acidic residues. 2 disordered regions span residues 708–770 (TEHE…SSGG) and 854–904 (ESDD…PAHL). The segment at 740–759 (RSFSRSQDDSEEDDDEDSGH) is linker. The EF-hand 2 domain occupies 768–786 (SGGVSYEEFQVLVRRVDRM). Residues 770 to 809 (GVSYEEFQVLVRRVDRMEHSIGSIVSKIDAVIVKLEAMER) adopt a coiled-coil conformation. Positions 878-890 (LRPRSSRPPSSLS) are enriched in low complexity.

It belongs to the polycystin family. As to quaternary structure, homotetramer. Component of the heterotetrameric polycystin channel complex with pkd1; the tetramer contains one pkd1 chain and three pkd2 chains. Interacts with pkd1l1. Post-translationally, phosphorylated. Phosphorylation is important for protein function; a mutant human construct that lacks the N-terminal phosphorylation sites cannot complement a zebrafish pkd2-deficient mutant. In terms of processing, N-glycosylated. The four subunits in a tetramer probably differ in the extent of glycosylation; simultaneous glycosylation of all experimentally validated sites would probably create steric hindrance. Sumoylated by SUMO1; sumoylation regulates PKD2 membrane recycling. In terms of tissue distribution, detected along cilia and at the cilium basal body in Kupffer's vesicle at the 10 somite stage. Detected in heart at 48hpf. Detected in muscle and pronephric kidney at 48 hpf. Detected on trunk muscle sarcolemma and sarcomere, on ependymal cell cilia in brain, at the apical cell membrane in epithelial cells in the ear, at the lateral line organ and olfactory placode at 56 hpf. Detected in adult kidney (at protein level).

The protein localises to the basolateral cell membrane. The protein resides in the cell membrane. Its subcellular location is the sarcolemma. It localises to the cytoplasm. It is found in the myofibril. The protein localises to the sarcomere. The protein resides in the sarcoplasmic reticulum membrane. Its subcellular location is the apical cell membrane. It localises to the endoplasmic reticulum membrane. It is found in the cell projection. The protein localises to the cilium. The protein resides in the cytoskeleton. Its subcellular location is the cilium basal body. It localises to the cytoplasmic vesicle membrane. It carries out the reaction K(+)(in) = K(+)(out). The catalysed reaction is Na(+)(in) = Na(+)(out). It catalyses the reaction Ca(2+)(in) = Ca(2+)(out). Its activity is regulated as follows. Channel activity is regulated by phosphorylation. Channel activity is regulated by intracellular Ca(2+). Forms a nonselective cation channel. Can function as a homotetrameric ion channel or can form heteromer with PKD1. Displays distinct function depending on its subcellular localization and regulation by its binding partners. In the primary cilium functions as a cation channel, with a preference for monovalent cations over divalent cations that allows K(+), Na(+) and Ca(2+) influx, with low selectivity for Ca(2+). In the endoplasmic reticulum, likely functions as a K(+) channel to facilitate Ca(2+) release. Required for normal oscillation of Ca(2+) levels within cilia; these oscillations of the intraciliary Ca(2+) levels can trigger cytoplasmic Ca(2+) signaling cascades. Required for normal temporal variation of the intracellular Ca(2+) levels in the heart. Plays a role in fluid-flow mechanosensation. Required for normal specification of the body left-right axis during embryogenesis, most likely via its role in ciliary Ca(2+) oscillations in Kupffer's vesicle. The sequence is that of Polycystin-2 from Danio rerio (Zebrafish).